The primary structure comprises 233 residues: Zinc metalloproteinase recombinant fibrinogenase II (233 aa).

The region spanning 19–215 is the Peptidase M12B domain; sequence KYVETVFVVD…HNPECIDNEP (197 aa). Residues Glu22 and Asp106 each contribute to the Ca(2+) site. Disulfide bonds link Cys130-Cys210, Cys170-Cys194, and Cys172-Cys177. Position 155 (His155) interacts with Zn(2+). Glu156 is an active-site residue. Residues His159 and His165 each coordinate Zn(2+). The N-linked (GlcNAc...) asparagine glycan is linked to Asn193. Ca(2+) is bound by residues Cys210, Asn213, Asn228, Leu230, and Glu232.

Belongs to the venom metalloproteinase (M12B) family. P-III subfamily. The cofactor is Zn(2+). As to expression, expressed by the venom gland.

Its subcellular location is the secreted. Its activity is regulated as follows. Inhibited by PMSF and EDTA. Slightly inhibited by Cu(2+) and Zn(2+). Not inhibited by aprotinin, SBTI, Ca(2+), Mg(2+), Na(+) and K(+). Its function is as follows. Snake venom zinc metalloprotease that acts at several levels. It has direct fibrino(geno)lytic activity (Aalpha chain of fibrinogen is cleaved quickly, Bbeta chain slowly, and gamma chain even more slowly) and degradation of TNF-alpha. These activities permit to protect against sepsis and disseminated intravascular coagulation. It inhibits ADP-induced platelet aggregation in human platelet-rich plasma (IC(50)=65.4 ug/ml). It decreases the activity of complement by degrading human C5, C6 and C9 in vitro, decreasing serum levels of C1q, C3 and C4 in rat, and inhibiting the MAC deposition on HUVECs membrane. This inhibition of complement protects against hyperacute rejection that is the main barrier in xenotransplantation. Has preference for Lys at the P1 position. Cleaves insulin B chain at '36-Val-|-Glu-37', '39-Leu-|-Tyr-40', and '48-Phe-|-Phe-49' bonds. Also cleaves fibronectin and type IV collagen. In Deinagkistrodon acutus (Hundred-pace snake), this protein is Zinc metalloproteinase recombinant fibrinogenase II.